Here is a 208-residue protein sequence, read N- to C-terminus: GTP cyclohydrolase-2 (208 aa).

49 to 53 (RLHSE) contributes to the GTP binding site. The Zn(2+) site is built by Cys-54, Cys-65, and Cys-67. Residues Gln-70, 92–94 (EGR), and Thr-114 contribute to the GTP site. The active-site Proton acceptor is the Asp-126. Arg-128 serves as the catalytic Nucleophile. The GTP site is built by Thr-149 and Lys-154.

This sequence belongs to the GTP cyclohydrolase II family. It depends on Zn(2+) as a cofactor.

The enzyme catalyses GTP + 4 H2O = 2,5-diamino-6-hydroxy-4-(5-phosphoribosylamino)-pyrimidine + formate + 2 phosphate + 3 H(+). It participates in cofactor biosynthesis; riboflavin biosynthesis; 5-amino-6-(D-ribitylamino)uracil from GTP: step 1/4. Catalyzes the conversion of GTP to 2,5-diamino-6-ribosylamino-4(3H)-pyrimidinone 5'-phosphate (DARP), formate and pyrophosphate. The polypeptide is GTP cyclohydrolase-2 (Azotobacter vinelandii (strain DJ / ATCC BAA-1303)).